We begin with the raw amino-acid sequence, 718 residues long: DNA topoisomerase 1 (718 aa).

The 143-residue stretch at 9-151 folds into the Toprim domain; it reads HEVIICEKPK…KFSTLTREEI (143 aa). Residues Glu-15 and Asp-113 each contribute to the Mg(2+) site. One can recognise a Topo IA-type catalytic domain in the interval 162–571; the sequence is DYGQVDSGAA…EAITEVRSIL (410 aa). The tract at residues 202 to 207 is interaction with DNA; it reads SAGRVQ. Tyr-320 acts as the O-(5'-phospho-DNA)-tyrosine intermediate in catalysis. A compositionally biased stretch (basic and acidic residues) spans 361-371; that stretch reads HEGKKEDDAHP. Positions 361–380 are disordered; sequence HEGKKEDDAHPAIHPTGLLP. 2 consecutive C4-type zinc fingers follow at residues 598–626 and 680–706; these read CPAC…YPDC and CPEC…FPKC.

Belongs to the type IA topoisomerase family. As to quaternary structure, monomer. It depends on Mg(2+) as a cofactor.

It catalyses the reaction ATP-independent breakage of single-stranded DNA, followed by passage and rejoining.. In terms of biological role, releases the supercoiling and torsional tension of DNA, which is introduced during the DNA replication and transcription, by transiently cleaving and rejoining one strand of the DNA duplex. Introduces a single-strand break via transesterification at a target site in duplex DNA. The scissile phosphodiester is attacked by the catalytic tyrosine of the enzyme, resulting in the formation of a DNA-(5'-phosphotyrosyl)-enzyme intermediate and the expulsion of a 3'-OH DNA strand. The free DNA strand then undergoes passage around the unbroken strand, thus removing DNA supercoils. Finally, in the religation step, the DNA 3'-OH attacks the covalent intermediate to expel the active-site tyrosine and restore the DNA phosphodiester backbone. The polypeptide is DNA topoisomerase 1 (Methanothermobacter thermautotrophicus (strain ATCC 29096 / DSM 1053 / JCM 10044 / NBRC 100330 / Delta H) (Methanobacterium thermoautotrophicum)).